We begin with the raw amino-acid sequence, 273 residues long: Patr class II histocompatibility antigen, DO beta chain (273 aa).

The first 26 residues, 1 to 26 (MGSGWVPWVVALLVNLTRLDSSMTQG), serve as a signal peptide directing secretion. Residues 27–120 (TDSPEDFVIQ…LGAPFTVGRK (94 aa)) form a beta-1 region. The Extracellular segment spans residues 27-224 (TDSPEDFVIQ…RAQSEYSWKK (198 aa)). Intrachain disulfides connect Cys41–Cys105 and Cys143–Cys199. N-linked (GlcNAc...) asparagine glycosylation occurs at Asn45. The tract at residues 121–214 (VQPEVTVYPE…SLLSPVSVEW (94 aa)) is beta-2. An Ig-like C1-type domain is found at 123–213 (PEVTVYPERT…SSLLSPVSVE (91 aa)). The segment at 215 to 224 (RAQSEYSWKK) is connecting peptide. The helical transmembrane segment at 225-245 (MLSGIAAFLLGLIFLLVGIVI) threads the bilayer. At 246-273 (QLRAQKGYVRTQMSGNEVSRAVLLPQSC) the chain is on the cytoplasmic side.

This sequence belongs to the MHC class II family. In terms of assembly, heterodimer of an alpha chain (DOA) and a beta chain (DOB). Forms a heterotetrameric complex with an HLA-DM molecule during intracellular transport in endosomal/lysosomal compartments in B-cells.

The protein localises to the endosome membrane. The protein resides in the lysosome membrane. Important modulator in the HLA class II restricted antigen presentation pathway by interaction with the HLA-DM molecule in B-cells. Modifies peptide exchange activity of HLA-DM. The polypeptide is Patr class II histocompatibility antigen, DO beta chain (Patr-DOB) (Pan troglodytes (Chimpanzee)).